Reading from the N-terminus, the 134-residue chain is Protein E6 (134 aa).

Zinc fingers lie at residues C15–C51 and C88–C124.

The protein belongs to the papillomaviridae E6 protein family. As to quaternary structure, forms homodimers. Interacts with ubiquitin-protein ligase UBE3A/E6-AP; this interaction stimulates UBE3A ubiquitin activity. Interacts with host BAK1.

The protein resides in the host cytoplasm. The protein localises to the host nucleus. In terms of biological role, plays a major role in the induction and maintenance of cellular transformation. E6 associates with host UBE3A/E6-AP ubiquitin-protein ligase and modulates its activity. Protects host keratinocytes from apoptosis by mediating the degradation of host BAK1. May also inhibit host immune response. The protein is Protein E6 of Bos taurus (Bovine).